The chain runs to 330 residues: ATP-dependent Clp protease proteolytic subunit-related protein 3, chloroplastic (330 aa).

Residues 1-43 (MASCLQASMNSLLPRSSSFSPHPPLSSNSSGRRNLKTFRYAFR) constitute a chloroplast transit peptide. The interval 7–32 (ASMNSLLPRSSSFSPHPPLSSNSSGR) is disordered. A compositionally biased stretch (low complexity) spans 8–30 (SMNSLLPRSSSFSPHPPLSSNSS).

This sequence belongs to the peptidase S14 family. In terms of assembly, component of the chloroplastic Clp protease core complex which consist of at least 16 proteins: CLPP4 (3 copies), CLPP5 (3 copies), CLPR4 (2 copies), ClpP1 (1 copy), CLPP6 (1 copy), CLPR2 (1 copy), CLPT1 (1 copy), CLPT2 (1 copy) and 3 copies of CLPP3 and/or CLPR1 and/or CLPR3. The core complex is organized in two heptameric rings, one containing CLPP3,4,5,6 in a 1:2:3:1 ratio and the other CLPP1 and CLPR1,2,3,4 in a 3:1:1:1:1 ratio.

The protein resides in the plastid. The protein localises to the chloroplast. The protein is ATP-dependent Clp protease proteolytic subunit-related protein 3, chloroplastic of Arabidopsis thaliana (Mouse-ear cress).